The primary structure comprises 129 residues: UPF0212 protein MA_1372 (129 aa).

This sequence belongs to the UPF0212 family.

This is UPF0212 protein MA_1372 from Methanosarcina acetivorans (strain ATCC 35395 / DSM 2834 / JCM 12185 / C2A).